A 141-amino-acid chain; its full sequence is Large ribosomal subunit protein uL13 (141 aa).

This sequence belongs to the universal ribosomal protein uL13 family. Part of the 50S ribosomal subunit.

This protein is one of the early assembly proteins of the 50S ribosomal subunit, although it is not seen to bind rRNA by itself. It is important during the early stages of 50S assembly. This chain is Large ribosomal subunit protein uL13, found in Helicobacter pylori (strain P12).